The primary structure comprises 129 residues: UPF0148 protein AF_2370 (129 aa).

Positions 61-80 (SAAKAESEEKPPESTKPAVK) are disordered.

This sequence belongs to the UPF0148 family.

The sequence is that of UPF0148 protein AF_2370 from Archaeoglobus fulgidus (strain ATCC 49558 / DSM 4304 / JCM 9628 / NBRC 100126 / VC-16).